A 486-amino-acid chain; its full sequence is Histidine--tRNA ligase, chloroplastic/mitochondrial (486 aa).

Belongs to the class-II aminoacyl-tRNA synthetase family.

It localises to the plastid. Its subcellular location is the chloroplast. It is found in the mitochondrion. The catalysed reaction is tRNA(His) + L-histidine + ATP = L-histidyl-tRNA(His) + AMP + diphosphate + H(+). This chain is Histidine--tRNA ligase, chloroplastic/mitochondrial, found in Arabidopsis thaliana (Mouse-ear cress).